The sequence spans 457 residues: RuvB-like helicase 1 (457 aa).

72 to 79 (GAPGTGKT) is an ATP binding site.

Belongs to the RuvB family. In terms of assembly, may form heterododecamers with RVB2. Component of the SWR1 chromatin remodeling complex, the INO80 chromatin remodeling complex, and of the R2TP complex.

It is found in the nucleus. The enzyme catalyses ATP + H2O = ADP + phosphate + H(+). Its function is as follows. DNA helicase which participates in several chromatin remodeling complexes, including the SWR1 and the INO80 complexes. The SWR1 complex mediates the ATP-dependent exchange of histone H2A for the H2A variant HZT1 leading to transcriptional regulation of selected genes by chromatin remodeling. The INO80 complex remodels chromatin by shifting nucleosomes and is involved in DNA repair. Also involved in pre-rRNA processing. This chain is RuvB-like helicase 1 (RBV1), found in Debaryomyces hansenii (strain ATCC 36239 / CBS 767 / BCRC 21394 / JCM 1990 / NBRC 0083 / IGC 2968) (Yeast).